A 463-amino-acid chain; its full sequence is Stress-activated protein kinase jnk-1 (463 aa).

Residues 1 to 12 are compositionally biased toward polar residues; the sequence is MEERLSTTSSYP. The interval 1-23 is disordered; it reads MEERLSTTSSYPSHPGRSVEEDH. Positions 119-412 constitute a Protein kinase domain; the sequence is YQNLRLIGSG…ISVDDALRHP (294 aa). Residues 126-131 and lysine 148 contribute to the ATP site; that span reads GSGAQG. The active-site Proton acceptor is the aspartate 244. Threonine 276 carries the phosphothreonine modification. A TXY motif is present at residues 276-278; that stretch reads TPY. Residue tyrosine 278 is modified to Phosphotyrosine.

This sequence belongs to the protein kinase superfamily. CMGC Ser/Thr protein kinase family. MAP kinase subfamily. Binds to the scaffolding protein, unc-16. Unc-16 also binds other components of the JNK signaling pathway. Interacts with daf-16. Mg(2+) is required as a cofactor. In terms of processing, dually phosphorylated on Thr-276 and Tyr-278, which activates the enzyme. Expressed in most neurons, including nerve ring, head ganglions, dorsal and ventral nerve cords and tail ganglions. The Thr-276/Tyr-278 phosphorylated form is present in the nerve ring upon heat exposure.

The protein localises to the cytoplasm. It localises to the perikaryon. Its subcellular location is the cell projection. It is found in the axon. The catalysed reaction is L-seryl-[protein] + ATP = O-phospho-L-seryl-[protein] + ADP + H(+). It carries out the reaction L-threonyl-[protein] + ATP = O-phospho-L-threonyl-[protein] + ADP + H(+). Activated by threonine and tyrosine phosphorylation by either of the dual specificity kinases, jkk-1 and mek-1. Serine/threonine-protein kinase which responds to activation by environmental stress by phosphorylating a number of transcription factors such as daf-16, and thus regulates transcriptional activity. By phosphorylating daf-16, plays a role in daf-16 nuclear translocation in intestinal cells in response to environmental stresses such as heat and oxidative stresses. Downstream of jkk-1, may coordinate locomotion via type-D GABAergic motoneurons and regulates synaptic vesicle transport in conjunction with unc-16. Independently of jkk-1, may regulate some mechanosensory responses, such as response to touch. Independently of jkk-1 and downstream of mek-1, plays a role in resistance to heavy metals, such as Cu(2+) or Cd(2+). Regulates germline cell apoptosis in response to heavy metals such as Cu(2+) and arsenite. Required for dopaminergic CEP neuron degeneration in response to Mn(2+). Required for normal sleep bout quantity and arousal thresholds during the transition from the last larval stage to adulthood in well-fed animals. Downstream of jkk-1 but independently of mek-1, positively regulates lifespan. The polypeptide is Stress-activated protein kinase jnk-1 (jnk-1) (Caenorhabditis elegans).